A 441-amino-acid chain; its full sequence is Ribulose bisphosphate carboxylase large chain (441 aa).

Substrate-binding residues include Asn89 and Thr139. Residue Lys141 is the Proton acceptor of the active site. Lys143 provides a ligand contact to substrate. Mg(2+) is bound by residues Lys167, Asp169, and Glu170. Lys167 is modified (N6-carboxylysine). The Proton acceptor role is filled by His260. Substrate-binding residues include Arg261, His293, and Ser345.

This sequence belongs to the RuBisCO large chain family. Type I subfamily. Heterohexadecamer of 8 large chains and 8 small chains; disulfide-linked. The disulfide link is formed within the large subunit homodimers. The cofactor is Mg(2+). The disulfide bond which can form in the large chain dimeric partners within the hexadecamer appears to be associated with oxidative stress and protein turnover.

It is found in the plastid. Its subcellular location is the chloroplast. It catalyses the reaction 2 (2R)-3-phosphoglycerate + 2 H(+) = D-ribulose 1,5-bisphosphate + CO2 + H2O. It carries out the reaction D-ribulose 1,5-bisphosphate + O2 = 2-phosphoglycolate + (2R)-3-phosphoglycerate + 2 H(+). In terms of biological role, ruBisCO catalyzes two reactions: the carboxylation of D-ribulose 1,5-bisphosphate, the primary event in carbon dioxide fixation, as well as the oxidative fragmentation of the pentose substrate in the photorespiration process. Both reactions occur simultaneously and in competition at the same active site. This is Ribulose bisphosphate carboxylase large chain from Symphoricarpos albus (Common snowberry).